The chain runs to 87 residues: Acyl-CoA-binding protein (87 aa).

The ACB domain occupies 3-87 (LKEEFEEHAV…KVKQLLEESA (85 aa)). An acyl-CoA contacts are provided by residues 30–34 (YGLYK), Lys56, and Tyr75.

Belongs to the ACBP family.

Its function is as follows. Binds medium- and long-chain acyl-CoA esters with very high affinity and may function as an intracellular carrier of acyl-CoA esters. This is Acyl-CoA-binding protein (ACABP) from Fritillaria agrestis (Stinkbells).